The chain runs to 398 residues: Streptopain (398 aa).

The first 27 residues, 1 to 27 (MNKKKLGIRLLSLLALGGFVLANPVFA), serve as a signal peptide directing secretion. The propeptide occupies 28 to 145 (DQNFARNEKE…TTYAGTAEIK (118 aa)). Cys-192 acts as the Nucleophile in catalysis. Residue Cys-192 is modified to Cysteine methyl disulfide; in zymogen form. Residues Ser-282 and Gly-339 each coordinate a protein. The Proton acceptor role is filled by His-340. Positions 368-390 (RLDALNPSALGTGGGAGGFNGYQ) are C-terminal active site loop.

Belongs to the peptidase C10 family. Monomer. In terms of processing, the mature protease is derived from the precursor sequence by cleavage, either in cis via an autocatalytic mechanism, or in trans by mature SpeB or host proteases (trypsin, plasmin or subtilisin). Maturation can involve a number of protein cleavage intermediates. Mature SpeB probably plays the most important role in protein maturation in physiological conditions. Methylthiolation at Cys-192 of the inactive zymogen form is probably involved in the mechanism of secretion of the proteinase into the culture fluid.

It localises to the secreted. It is found in the host extracellular space. The protein resides in the host cytoplasm. It catalyses the reaction Preferential cleavage with hydrophobic residues at P2, P1 and P1'.. Its activity is regulated as follows. Synthesized as an inactive zymogen to protect the intracellular components of the bacteria from proteolytic activity during protein production. Once secreted into the extracellular milieu, cleaved into the active protease: maturation can be mediated in cis by autocatalytic cleavage, or in trans by mature SpeB or host proteases. Protease activity is strongly inhibited by zinc and copper, which prevent its maturation into an active protease: inhibition by metal ions may be required to prevent proteolysis of streptococcal proteins. In terms of biological role, cysteine protease that acts as a key streptococcal virulence factor by cleaving host proteins involved in immune response. Triggers inflammation by mediating cleavage of host proteins, which can both promote host pathogenesis by triggering sterile inflammation and/or restrict streptococcal infection, depending on host immune statue and infection site. Cleaves host gasdermin-A (GSDMA) in epithelial cells, promoting GSDMA activation and formation of gasdermin pores, triggering pyroptosis. Pyroptosis triggers the elimination of the infected skin cell, depriving the pathogen of its protective niche, while inducing an inflammatory response. This ultimately prevents bacterial penetration of the epithelial barrier and a subsequent systemic dissemination of the pathogen. Also mediates cleavage of the cytokine precursor interleukin-1 beta (IL1B) to its mature form, resulting in inflammation and septic shock. SpeB-mediated maturation of IL1B plays a dual role depending on infection site: while IL1B inflammatory response prevents bacterial growth during invasive skin infections, it promotes streptococcal infection of the nasopharynx by disrupting colonization resistance mediated by the microbiota. Inhibits host autophagy be catalyzing cleavage and inactivation of key autophagy factors, such as CALCOCO2, NBR1 and SQSTM1. Cleaves and inhibits a number of complement factors, such as C2, C3-beta chain of C3, C4, C5 or SERPING1, thereby promoting evasion of host immunity. May also impair adaptive immunity by catalyzing cleavage and degradation of host immunoglobulins to promote immune system evasion; the relevance of this activity is however unsure in vivo. Catalyzes maturation and release of the peptide hormone bradykinin from the precursor Kininogen-1 (KNG1) to produce hypotension during septic shock. Also involved in bacterial translocation across the host epithelial barrier by mediating cleavage and degradation of host epithelial junction proteins, such as CDH1 and OCLN. Additionally, has been involved in degradation of fibronectin and vitronectin, two host extracellular matrix proteins involved in tissue integrity. Also able to catalyze cleavage and degradation of streptococcal proteins, such as C5a peptidase, EndoS or SmeZ. Degradation of streptococcal proteins is however strictly regulated to preserve integrity of other virulence factors. This is Streptopain (speB) from Streptococcus pyogenes serotype M28 (strain MGAS6180).